Consider the following 163-residue polypeptide: Nucleotide-binding protein YajQ (163 aa).

It belongs to the YajQ family.

Functionally, nucleotide-binding protein. This Salmonella typhi protein is Nucleotide-binding protein YajQ.